We begin with the raw amino-acid sequence, 427 residues long: MAAAAAEQQQQGFRPLDEASLVAYIKATPALAARLGGRLDALTIKEVGDGNLNFVYIVLSDAGSLVIKQALPYIRLVGDSWPMSRERAYFEASALQKHRALCPDHVPEVYHFDRAMSLIGMRYIEPPHIILRKGLVAGVEYPLLAEHMADYMAKTLFFTSLLYNSTTDHKKGVAQYCDNVEMSRLTEQVVFSDPYRVAKYNRCTSPFLDNDAAAVREDAELKLEIAELKSMFIERAQAFLHGDLHTSSIMVTPDSTQVIDPEFAFYGPMGYDIGAFLGNLILAYFSQDGHADQANDRKAYKKWILKTIEDSWNFFHKKFVELWNKHKDGNGEAYLPPIYNSSELLSLVQKKYMTSLFHDSLGFGSAKMIRRIVGIAHVEDFESIEDASKRASCERRALNCAKAILKGRRQFESIEQVIVHVQSFDRD.

ATP is bound by residues 49–53 (DGNLN), Lys68, and 122–124 (RYI). Asn51 serves as a coordination point for substrate. Residue Asp243 coordinates substrate. Residue 260 to 262 (DPE) participates in ATP binding. Arg370 is a binding site for substrate.

Belongs to the methylthioribose kinase family. In terms of assembly, homodimer.

It catalyses the reaction 5-(methylsulfanyl)-D-ribose + ATP = 5-(methylsulfanyl)-alpha-D-ribose 1-phosphate + ADP + H(+). Its pathway is amino-acid biosynthesis; L-methionine biosynthesis via salvage pathway; S-methyl-5-thio-alpha-D-ribose 1-phosphate from S-methyl-5'-thioadenosine (hydrolase route): step 2/2. In terms of biological role, catalyzes the phosphorylation of methylthioribose into methylthioribose-1-phosphate. This is Methylthioribose kinase 2 (MTK2) from Oryza sativa subsp. japonica (Rice).